Here is a 178-residue protein sequence, read N- to C-terminus: Large ribosomal subunit protein uL6 (178 aa).

It belongs to the universal ribosomal protein uL6 family. In terms of assembly, part of the 50S ribosomal subunit.

This protein binds to the 23S rRNA, and is important in its secondary structure. It is located near the subunit interface in the base of the L7/L12 stalk, and near the tRNA binding site of the peptidyltransferase center. The polypeptide is Large ribosomal subunit protein uL6 (Corynebacterium diphtheriae (strain ATCC 700971 / NCTC 13129 / Biotype gravis)).